Reading from the N-terminus, the 83-residue chain is Apolipoprotein C-I, basic form (83 aa).

An N-terminal signal peptide occupies residues 1 to 26; the sequence is MRLFLSLPVLVVVLSMVLEGPAPAQG.

This sequence belongs to the apolipoprotein C1 family.

It is found in the secreted. Functionally, inhibitor of lipoprotein binding to the low density lipoprotein (LDL) receptor, LDL receptor-related protein, and very low density lipoprotein (VLDL) receptor. Associates with high density lipoproteins (HDL) and the triacylglycerol-rich lipoproteins in the plasma and makes up about 10% of the protein of the VLDL and 2% of that of HDL. Appears to interfere directly with fatty acid uptake and is also the major plasma inhibitor of cholesteryl ester transfer protein (CETP). Binds free fatty acids and reduces their intracellular esterification. Modulates the interaction of APOE with beta-migrating VLDL and inhibits binding of beta-VLDL to the LDL receptor-related protein. In Cercocebus atys (Sooty mangabey), this protein is Apolipoprotein C-I, basic form (APOC1B).